The following is a 539-amino-acid chain: CTP synthase (539 aa).

An amidoligase domain region spans residues 1–267 (MTKYIFVTGG…DQKVVDFLHI (267 aa)). Ser-13 is a binding site for CTP. A UTP-binding site is contributed by Ser-13. 14–19 (SLGKGI) is a binding site for ATP. Tyr-54 contributes to the L-glutamine binding site. An ATP-binding site is contributed by Asp-71. Asp-71 and Glu-141 together coordinate Mg(2+). Residues 148–150 (DME), 188–193 (KSKPTQ), and Lys-224 contribute to the CTP site. Residues 188-193 (KSKPTQ) and Lys-224 each bind UTP. Positions 294-537 (KITLVGKYVE…IGAASGLQVD (244 aa)) constitute a Glutamine amidotransferase type-1 domain. Residue Gly-356 participates in L-glutamine binding. The active-site Nucleophile; for glutamine hydrolysis is the Cys-383. L-glutamine-binding positions include 384-387 (LGMQ), Glu-407, and Arg-465. Active-site residues include His-510 and Glu-512.

The protein belongs to the CTP synthase family. Homotetramer.

It carries out the reaction UTP + L-glutamine + ATP + H2O = CTP + L-glutamate + ADP + phosphate + 2 H(+). The catalysed reaction is L-glutamine + H2O = L-glutamate + NH4(+). The enzyme catalyses UTP + NH4(+) + ATP = CTP + ADP + phosphate + 2 H(+). The protein operates within pyrimidine metabolism; CTP biosynthesis via de novo pathway; CTP from UDP: step 2/2. Its activity is regulated as follows. Allosterically activated by GTP, when glutamine is the substrate; GTP has no effect on the reaction when ammonia is the substrate. The allosteric effector GTP functions by stabilizing the protein conformation that binds the tetrahedral intermediate(s) formed during glutamine hydrolysis. Inhibited by the product CTP, via allosteric rather than competitive inhibition. Its function is as follows. Catalyzes the ATP-dependent amination of UTP to CTP with either L-glutamine or ammonia as the source of nitrogen. Regulates intracellular CTP levels through interactions with the four ribonucleotide triphosphates. The polypeptide is CTP synthase (Lactobacillus delbrueckii subsp. bulgaricus (strain ATCC BAA-365 / Lb-18)).